The following is a 205-amino-acid chain: Cerebellin-3 (205 aa).

The N-terminal stretch at 1–32 is a signal peptide; it reads MLGTKRHWPPGPSLSLELPLALTLLALRAGWA. The C1q domain maps to 67-205; that stretch reads APPGRVAFAA…SFSGFLIFPL (139 aa). An N-linked (GlcNAc...) asparagine glycan is attached at N90.

In terms of assembly, heterohexamer; disulfide-linked heterotrimers. Interacts with CBLN1. May also form oligomers with CBLN2 and CBLN4.

It is found in the endoplasmic reticulum. The protein resides in the golgi apparatus. It localises to the cis-Golgi network. The protein localises to the secreted. Its subcellular location is the synapse. May be involved in synaptic functions in the CNS. This Bos taurus (Bovine) protein is Cerebellin-3 (CBLN3).